A 1352-amino-acid chain; its full sequence is DNA-directed RNA polymerase subunit beta (1352 aa).

This sequence belongs to the RNA polymerase beta chain family. As to quaternary structure, the RNAP catalytic core consists of 2 alpha, 1 beta, 1 beta' and 1 omega subunit. When a sigma factor is associated with the core the holoenzyme is formed, which can initiate transcription.

The enzyme catalyses RNA(n) + a ribonucleoside 5'-triphosphate = RNA(n+1) + diphosphate. Its function is as follows. DNA-dependent RNA polymerase catalyzes the transcription of DNA into RNA using the four ribonucleoside triphosphates as substrates. The sequence is that of DNA-directed RNA polymerase subunit beta from Hydrogenovibrio crunogenus (strain DSM 25203 / XCL-2) (Thiomicrospira crunogena).